Here is a 1331-residue protein sequence, read N- to C-terminus: Beta-mannanase/endoglucanase A (1331 aa).

An N-terminal signal peptide occupies residues 1–41 (MRLKTKIRKKWLSVLCTVVFLLNILFIANVTILPKVGAATS). The tract at residues 42-325 (NDGVVKIDTS…YKTNAIGTSS (284 aa)) is catalytic (mannanase). The active-site Proton donor is Glu162. The active-site Nucleophile is Glu257. 3 disordered regions span residues 319–363 (NAIG…TPAT), 515–566 (PSGA…TPAT), and 717–780 (EPSG…PLPT). Over residues 323 to 335 (TSSTPTPTSTVTP) the composition is skewed to low complexity. Residues 363–516 (TSGQIKVLYA…GVLVWGQEPS (154 aa)) enclose the CBM3 1 domain. Composition is skewed to pro residues over residues 521–541 (APAP…PTVT) and 551–561 (TPTPTPTPTPV). One can recognise a CBM3 2 domain in the interval 566–719 (TGGQIKVLYA…GVLVWGQEPS (154 aa)). Positions 721-735 (TTPSPTSTPTVTVTP) are enriched in low complexity. 2 stretches are compositionally biased toward pro residues: residues 736–756 (TPTP…PTVT) and 766–780 (TPTP…PLPT). The tract at residues 781-1331 (ISPSPSVVEI…RNLVFMRALV (551 aa)) is catalytic (endoglucanase).

This sequence in the N-terminal section; belongs to the glycosyl hydrolase 5 (cellulase A) family. In the C-terminal section; belongs to the glycosyl hydrolase 44 (cellulase J) family.

It catalyses the reaction Random hydrolysis of (1-&gt;4)-beta-D-mannosidic linkages in mannans, galactomannans and glucomannans.. It carries out the reaction Endohydrolysis of (1-&gt;4)-beta-D-glucosidic linkages in cellulose, lichenin and cereal beta-D-glucans.. Its function is as follows. Degradation of hemicelluloses, the second most abundant polysaccharides in nature. Contains two catalytic domains with mannanase and endoglucanase activities. The protein is Beta-mannanase/endoglucanase A (manA) of Caldicellulosiruptor saccharolyticus (Caldocellum saccharolyticum).